The primary structure comprises 132 residues: Outer membrane protein assembly factor BamE (132 aa).

The first 16 residues, 1–16, serve as a signal peptide directing secretion; the sequence is MQKLVLTLLVTSLLAG. Cysteine 17 is lipidated: N-palmitoyl cysteine. A lipid anchor (S-diacylglycerol cysteine) is attached at cysteine 17.

The protein belongs to the BamE family. In terms of assembly, part of the Bam complex.

It localises to the cell outer membrane. Part of the outer membrane protein assembly complex, which is involved in assembly and insertion of beta-barrel proteins into the outer membrane. This chain is Outer membrane protein assembly factor BamE, found in Acinetobacter pittii (strain PHEA-2).